The sequence spans 347 residues: GMP reductase (347 aa).

108 to 131 (ADFQKTKDIMALTDDLIFICVDIA) contacts NADP(+). Positions 181 and 183 each coordinate K(+). Cysteine 186 (thioimidate intermediate) is an active-site residue. 216–239 (IIGDGGCSCAGDVSKAFGGGADFV) is a binding site for NADP(+).

It belongs to the IMPDH/GMPR family. GuaC type 1 subfamily. In terms of assembly, homotetramer.

The catalysed reaction is IMP + NH4(+) + NADP(+) = GMP + NADPH + 2 H(+). Its function is as follows. Catalyzes the irreversible NADPH-dependent deamination of GMP to IMP. It functions in the conversion of nucleobase, nucleoside and nucleotide derivatives of G to A nucleotides, and in maintaining the intracellular balance of A and G nucleotides. This chain is GMP reductase, found in Aliivibrio salmonicida (strain LFI1238) (Vibrio salmonicida (strain LFI1238)).